Consider the following 622-residue polypeptide: Low affinity potassium transport system protein Kup (622 aa).

A run of 12 helical transmembrane segments spans residues 9–29, 49–69, 101–121, 137–157, 163–183, 213–233, 247–267, 276–296, 337–357, 363–383, 395–415, and 419–439; these read LPAL…TSPL, VFGF…IKYI, VLVI…VITP, PQLD…LFVI, GMVG…LAVL, VSFI…ALYA, WFSV…ALLL, PFFL…ATLA, IYIP…IVSF, LAAA…ILSA, LFVG…FSAN, and IVSG…VMTT.

Belongs to the HAK/KUP transporter (TC 2.A.72) family.

It is found in the cell inner membrane. It catalyses the reaction K(+)(in) + H(+)(in) = K(+)(out) + H(+)(out). Its function is as follows. Responsible for the low-affinity transport of potassium into the cell. Likely operates as a K(+):H(+) symporter. The protein is Low affinity potassium transport system protein Kup of Klebsiella pneumoniae subsp. pneumoniae (strain ATCC 700721 / MGH 78578).